The chain runs to 174 residues: Adenine phosphoribosyltransferase (174 aa).

Belongs to the purine/pyrimidine phosphoribosyltransferase family. As to quaternary structure, homodimer.

The protein localises to the cytoplasm. It catalyses the reaction AMP + diphosphate = 5-phospho-alpha-D-ribose 1-diphosphate + adenine. Its pathway is purine metabolism; AMP biosynthesis via salvage pathway; AMP from adenine: step 1/1. Catalyzes a salvage reaction resulting in the formation of AMP, that is energically less costly than de novo synthesis. The protein is Adenine phosphoribosyltransferase of Agathobacter rectalis (strain ATCC 33656 / DSM 3377 / JCM 17463 / KCTC 5835 / VPI 0990) (Eubacterium rectale).